A 356-amino-acid polypeptide reads, in one-letter code: Heat-inducible transcription repressor HrcA (356 aa).

Belongs to the HrcA family.

Its function is as follows. Negative regulator of class I heat shock genes (grpE-dnaK-dnaJ and groELS operons). Prevents heat-shock induction of these operons. In Brucella abortus (strain S19), this protein is Heat-inducible transcription repressor HrcA.